Consider the following 255-residue polypeptide: Imidazole glycerol phosphate synthase subunit HisF (255 aa).

Catalysis depends on residues D12 and D131.

The protein belongs to the HisA/HisF family. In terms of assembly, heterodimer of HisH and HisF.

Its subcellular location is the cytoplasm. The enzyme catalyses 5-[(5-phospho-1-deoxy-D-ribulos-1-ylimino)methylamino]-1-(5-phospho-beta-D-ribosyl)imidazole-4-carboxamide + L-glutamine = D-erythro-1-(imidazol-4-yl)glycerol 3-phosphate + 5-amino-1-(5-phospho-beta-D-ribosyl)imidazole-4-carboxamide + L-glutamate + H(+). It functions in the pathway amino-acid biosynthesis; L-histidine biosynthesis; L-histidine from 5-phospho-alpha-D-ribose 1-diphosphate: step 5/9. IGPS catalyzes the conversion of PRFAR and glutamine to IGP, AICAR and glutamate. The HisF subunit catalyzes the cyclization activity that produces IGP and AICAR from PRFAR using the ammonia provided by the HisH subunit. The sequence is that of Imidazole glycerol phosphate synthase subunit HisF from Salinispora arenicola (strain CNS-205).